Consider the following 1423-residue polypeptide: Fructan beta-fructosidase (1423 aa).

Residues 1 to 39 form the signal peptide; that stretch reads MEEETVCKNWFMRKSGKSWIFGCAVFFVLGLATALPVAA. The disordered stretch occupies residues 44-161; that stretch reads QTTAADTAVT…TNLEDMSHDT (118 aa). Polar residues predominate over residues 69 to 126; it reads AVTETTQSEGTASKQLTTPAVADQTTEPTDNEPISSSDGASSPYQVTDTTEPQQTLTP. Substrate is bound by residues 455–458, Q474, 513–514, 581–582, and D783; these read WAND, FS, and RD. D458 is a catalytic residue. An involved in binding of sugars with beta-(2,6) linkages or binding of molecular weight fructans region spans residues 867–871; sequence ASVEV. Residues 924–1002 enclose the BIG2 domain; sequence PVAMNTTTAK…SKENPSLSKT (79 aa). Residues 1368–1385 show a composition bias toward polar residues; the sequence is DVNSVQQTEPSVMSSSPK. The interval 1368–1394 is disordered; sequence DVNSVQQTEPSVMSSSPKATLPDTGDH. The short motif at 1388 to 1392 is the LPXTG sorting signal element; that stretch reads LPDTG. Residue T1391 is modified to Pentaglycyl murein peptidoglycan amidated threonine. Positions 1392 to 1423 are cleaved as a propeptide — removed by sortase; the sequence is GDHKTDLSQLGVLAMIGSFLVEIAGYFKKRKD.

Belongs to the glycosyl hydrolase 32 family.

It is found in the secreted. Its subcellular location is the cell wall. The catalysed reaction is Hydrolysis of terminal, non-reducing (2-&gt;1)- and (2-&gt;6)-linked beta-D-fructofuranose residues in fructans.. In terms of biological role, this protein is a fructanase enzyme which degrades levans and inulins to fructose and also cleaves sucrose into glucose and fructose and can therefore function as an extracellular invertase. The chain is Fructan beta-fructosidase (fruA) from Streptococcus mutans serotype c (strain ATCC 700610 / UA159).